A 375-amino-acid polypeptide reads, in one-letter code: Stimulator of interferon genes protein 2 (375 aa).

4 helical membrane passes run 30–50 (TATV…LLAV), 60–80 (IHFL…GELV), 114–134 (AGSI…VLYE), and 144–164 (YPIL…LVGL). Y195, R256, and R262 together coordinate 2',3'-cGAMP.

Belongs to the STING family.

The protein localises to the membrane. Functionally, facilitator of innate immune signaling that acts as a sensor of second messenger signals produced by cyclic GMP-AMP synthase-like receptors (cGLRs) and promotes the production of type I interferon. Innate immune response is triggered in response to nucleotides from viruses and bacteria delivered to the cytoplasm. Acts by binding cyclic dinucleotides: recognizes and binds 2'-3' linked cGAMP (2'-3'-cGAMP), a second messengers produced by cGLRs in response to nucleotides in the cytosol, such as double-stranded RNA (dsRNA). Upon binding to 2'-3'-cGAMP, oligomerizes and promotes the recruitment and subsequent activation of the transcription factor IRF3 to induce expression of type I interferon. The protein is Stimulator of interferon genes protein 2 of Stylophora pistillata (Smooth cauliflower coral).